A 600-amino-acid chain; its full sequence is Elongation factor 4 (600 aa).

The tr-type G domain occupies 4–186 (SKIRNFSIIA…AIVNKIPAPY (183 aa)). GTP contacts are provided by residues 16-21 (DHGKST) and 133-136 (NKVD).

This sequence belongs to the TRAFAC class translation factor GTPase superfamily. Classic translation factor GTPase family. LepA subfamily.

Its subcellular location is the cell membrane. It catalyses the reaction GTP + H2O = GDP + phosphate + H(+). Its function is as follows. Required for accurate and efficient protein synthesis under certain stress conditions. May act as a fidelity factor of the translation reaction, by catalyzing a one-codon backward translocation of tRNAs on improperly translocated ribosomes. Back-translocation proceeds from a post-translocation (POST) complex to a pre-translocation (PRE) complex, thus giving elongation factor G a second chance to translocate the tRNAs correctly. Binds to ribosomes in a GTP-dependent manner. This chain is Elongation factor 4, found in Mesoplasma florum (strain ATCC 33453 / NBRC 100688 / NCTC 11704 / L1) (Acholeplasma florum).